The sequence spans 203 residues: Translation machinery-associated protein 16 (203 aa).

The interval 1–39 is disordered; the sequence is MPKAPKGKSAGREKKVIHPYSRKAAQITREAHKQEKKEK. Serine 9 carries the post-translational modification ADP-ribosylserine. The span at 29–39 shows a compositional bias: basic and acidic residues; that stretch reads REAHKQEKKEK.

The protein belongs to the TMA16 family. In terms of assembly, associates with pre-60S ribosomal particles.

The protein resides in the nucleus. Functionally, involved in the biogenesis of the 60S ribosomal subunit in the nucleus. The sequence is that of Translation machinery-associated protein 16 (TMA16) from Homo sapiens (Human).